A 424-amino-acid polypeptide reads, in one-letter code: Enolase (424 aa).

(2R)-2-phosphoglycerate is bound at residue glutamine 162. Glutamate 204 acts as the Proton donor in catalysis. Residues aspartate 241, glutamate 284, and aspartate 311 each contribute to the Mg(2+) site. (2R)-2-phosphoglycerate is bound by residues lysine 336, arginine 365, serine 366, and lysine 387. Lysine 336 serves as the catalytic Proton acceptor.

Belongs to the enolase family. Mg(2+) serves as cofactor.

It is found in the cytoplasm. It localises to the secreted. The protein localises to the cell surface. The enzyme catalyses (2R)-2-phosphoglycerate = phosphoenolpyruvate + H2O. The protein operates within carbohydrate degradation; glycolysis; pyruvate from D-glyceraldehyde 3-phosphate: step 4/5. Its function is as follows. Catalyzes the reversible conversion of 2-phosphoglycerate (2-PG) into phosphoenolpyruvate (PEP). It is essential for the degradation of carbohydrates via glycolysis. This Agrobacterium fabrum (strain C58 / ATCC 33970) (Agrobacterium tumefaciens (strain C58)) protein is Enolase.